The primary structure comprises 462 residues: tRNA-2-methylthio-N(6)-dimethylallyladenosine synthase (462 aa).

An MTTase N-terminal domain is found at 28-144 (KKLFVKTYGC…LPKMMEAVNA (117 aa)). Residues Cys37, Cys73, Cys107, Cys181, Cys185, and Cys188 each coordinate [4Fe-4S] cluster. The Radical SAM core domain occupies 167 to 398 (ATRGPTAFLT…QALLTQQQRA (232 aa)). The TRAM domain occupies 401 to 462 (DAMVGRRVKV…KTNSLTGRLV (62 aa)).

This sequence belongs to the methylthiotransferase family. MiaB subfamily. As to quaternary structure, monomer. The cofactor is [4Fe-4S] cluster.

Its subcellular location is the cytoplasm. The catalysed reaction is N(6)-dimethylallyladenosine(37) in tRNA + (sulfur carrier)-SH + AH2 + 2 S-adenosyl-L-methionine = 2-methylsulfanyl-N(6)-dimethylallyladenosine(37) in tRNA + (sulfur carrier)-H + 5'-deoxyadenosine + L-methionine + A + S-adenosyl-L-homocysteine + 2 H(+). In terms of biological role, catalyzes the methylthiolation of N6-(dimethylallyl)adenosine (i(6)A), leading to the formation of 2-methylthio-N6-(dimethylallyl)adenosine (ms(2)i(6)A) at position 37 in tRNAs that read codons beginning with uridine. The polypeptide is tRNA-2-methylthio-N(6)-dimethylallyladenosine synthase (Jannaschia sp. (strain CCS1)).